We begin with the raw amino-acid sequence, 469 residues long: ATP-dependent protease ATPase subunit HslU (469 aa).

ATP-binding positions include Ile-24, 66-71 (GVGKTE), Asp-282, Glu-347, and Arg-419.

Belongs to the ClpX chaperone family. HslU subfamily. As to quaternary structure, a double ring-shaped homohexamer of HslV is capped on each side by a ring-shaped HslU homohexamer. The assembly of the HslU/HslV complex is dependent on binding of ATP.

The protein resides in the cytoplasm. In terms of biological role, ATPase subunit of a proteasome-like degradation complex; this subunit has chaperone activity. The binding of ATP and its subsequent hydrolysis by HslU are essential for unfolding of protein substrates subsequently hydrolyzed by HslV. HslU recognizes the N-terminal part of its protein substrates and unfolds these before they are guided to HslV for hydrolysis. The polypeptide is ATP-dependent protease ATPase subunit HslU (Listeria monocytogenes serotype 4a (strain HCC23)).